A 368-amino-acid polypeptide reads, in one-letter code: DNA replication and repair protein RecF (368 aa).

30-37 (GDNGAGKT) contributes to the ATP binding site.

The protein belongs to the RecF family.

Its subcellular location is the cytoplasm. In terms of biological role, the RecF protein is involved in DNA metabolism; it is required for DNA replication and normal SOS inducibility. RecF binds preferentially to single-stranded, linear DNA. It also seems to bind ATP. The chain is DNA replication and repair protein RecF from Xanthomonas axonopodis pv. citri (strain 306).